The primary structure comprises 919 residues: TRPM8 channel-associated factor 2 (919 aa).

Residues 542-841 enclose the Peptidase M60 domain; it reads DCWVSTGLYL…TYLQLQEAFG (300 aa).

Belongs to the TCAF family. In terms of assembly, isoform 2 interacts with TRPM8 (via N-terminus and C-terminus domains); the interaction inhibits TRPM8 channel activity. Interacts with TRPV6. Isoform 2 is expressed in the prostate and in cancerous prostate samples.

It localises to the cell membrane. Functionally, negatively regulates the plasma membrane cation channel TRPM8 activity. Involved in the recruitment of TRPM8 to the cell surface. Promotes prostate cancer cell migration stimulation in a TRPM8-dependent manner. The protein is TRPM8 channel-associated factor 2 of Homo sapiens (Human).